Consider the following 569-residue polypeptide: Undecaprenyl phosphate-alpha-4-amino-4-deoxy-L-arabinose arabinosyl transferase 1 (569 aa).

12 helical membrane passes run 27–47 (GLIL…GLWI), 98–120 (LFGV…YLLA), 129–149 (INAA…QAGY), 151–171 (NLDP…WFAI), 194–214 (LMTK…PYML), 225–245 (YGLV…LAVH), 275–295 (PWWF…LLLP), 311–331 (AYLA…SGKL), 334–354 (YIMP…VKWL), 366–386 (GVFN…LQAT), 396–416 (FSLS…ALQV), and 420–440 (LTLW…LPAA).

Belongs to the glycosyltransferase 83 family.

The protein resides in the cell inner membrane. It carries out the reaction 4-amino-4-deoxy-alpha-L-arabinopyranosyl di-trans,octa-cis-undecaprenyl phosphate + lipid IVA = lipid IIA + di-trans,octa-cis-undecaprenyl phosphate.. It participates in lipopolysaccharide metabolism; 4-amino-4-deoxy-beta-L-arabinose-lipid A biosynthesis. Functionally, catalyzes the transfer of the L-Ara4N moiety of the glycolipid undecaprenyl phosphate-alpha-L-Ara4N to lipid A. The modified arabinose is attached to lipid A and is required for resistance to polymyxin and cationic antimicrobial peptides. This Pseudomonas fluorescens (strain Pf0-1) protein is Undecaprenyl phosphate-alpha-4-amino-4-deoxy-L-arabinose arabinosyl transferase 1.